We begin with the raw amino-acid sequence, 338 residues long: Outer membrane transporter protein TsaT (338 aa).

The signal sequence occupies residues 1–22 (MNFRRRLCTAALIAALPLASQA).

Part of a two-component transport system composed of TsaT and TsaS.

Its subcellular location is the cell outer membrane. Involved in the uptake of p-toluenesulphonate (TSA). Forms a large, general diffusion pore with a preference for anions. This Comamonas testosteroni (Pseudomonas testosteroni) protein is Outer membrane transporter protein TsaT (tsaT).